A 213-amino-acid chain; its full sequence is MKPYQRQFIEFALSKQVLKFGEFTLKSGRKSPYFFNAGLFNTGRDLALLGRFYAEALVDSGIEFDLLFGPAYKGIPIATTTAVALAEHHDLDLPYCFNRKEAKDHGEGGNLVGSALQGRVMLVDDVITAGTAIRESMEIIQANGATLAGVLISLDRQERGRGEISAIQEVERDYNCKVISIITLKDLIAYLEGKPEMAEHLAAVKAYREEFGV.

Lysine 26 contacts 5-phospho-alpha-D-ribose 1-diphosphate. 34–35 (FF) is a binding site for orotate. Residues 72 to 73 (YK), arginine 99, lysine 100, lysine 103, histidine 105, and 124 to 132 (DDVITAGTA) each bind 5-phospho-alpha-D-ribose 1-diphosphate. Residues threonine 128 and arginine 156 each coordinate orotate.

This sequence belongs to the purine/pyrimidine phosphoribosyltransferase family. PyrE subfamily. As to quaternary structure, homodimer. Requires Mg(2+) as cofactor.

It carries out the reaction orotidine 5'-phosphate + diphosphate = orotate + 5-phospho-alpha-D-ribose 1-diphosphate. It participates in pyrimidine metabolism; UMP biosynthesis via de novo pathway; UMP from orotate: step 1/2. Its function is as follows. Catalyzes the transfer of a ribosyl phosphate group from 5-phosphoribose 1-diphosphate to orotate, leading to the formation of orotidine monophosphate (OMP). This chain is Orotate phosphoribosyltransferase, found in Shigella dysenteriae serotype 1 (strain Sd197).